Consider the following 563-residue polypeptide: Putative cysteine ligase BshC (563 aa).

It belongs to the BshC family.

The chain is Putative cysteine ligase BshC from Chlorobium phaeobacteroides (strain BS1).